Reading from the N-terminus, the 187-residue chain is Protein GrpE (187 aa).

Residues 1–30 (MEKKETKSESEKTNKQDNKNTKSQKKENLN) form a disordered region.

It belongs to the GrpE family. As to quaternary structure, homodimer.

Its subcellular location is the cytoplasm. Functionally, participates actively in the response to hyperosmotic and heat shock by preventing the aggregation of stress-denatured proteins, in association with DnaK and GrpE. It is the nucleotide exchange factor for DnaK and may function as a thermosensor. Unfolded proteins bind initially to DnaJ; upon interaction with the DnaJ-bound protein, DnaK hydrolyzes its bound ATP, resulting in the formation of a stable complex. GrpE releases ADP from DnaK; ATP binding to DnaK triggers the release of the substrate protein, thus completing the reaction cycle. Several rounds of ATP-dependent interactions between DnaJ, DnaK and GrpE are required for fully efficient folding. This Borreliella burgdorferi (strain ATCC 35210 / DSM 4680 / CIP 102532 / B31) (Borrelia burgdorferi) protein is Protein GrpE.